Reading from the N-terminus, the 91-residue chain is Acylphosphatase (91 aa).

The Acylphosphatase-like domain maps to 3–91 (CLKAVVKGKV…GNYGDFHIKY (89 aa)). Active-site residues include R18 and N36.

The protein belongs to the acylphosphatase family.

It catalyses the reaction an acyl phosphate + H2O = a carboxylate + phosphate + H(+). This is Acylphosphatase (acyP) from Dehalococcoides mccartyi (strain ATCC BAA-2266 / KCTC 15142 / 195) (Dehalococcoides ethenogenes (strain 195)).